The primary structure comprises 383 residues: Erythronate-4-phosphate dehydrogenase (383 aa).

The substrate site is built by Ser-45 and Thr-66. Asp-146 and Thr-175 together coordinate NAD(+). Arg-208 is an active-site residue. Asp-232 serves as a coordination point for NAD(+). Residue Glu-237 is part of the active site. Catalysis depends on His-254, which acts as the Proton donor. Gly-257 is a binding site for NAD(+).

This sequence belongs to the D-isomer specific 2-hydroxyacid dehydrogenase family. PdxB subfamily. In terms of assembly, homodimer.

The protein localises to the cytoplasm. The enzyme catalyses 4-phospho-D-erythronate + NAD(+) = (R)-3-hydroxy-2-oxo-4-phosphooxybutanoate + NADH + H(+). Its pathway is cofactor biosynthesis; pyridoxine 5'-phosphate biosynthesis; pyridoxine 5'-phosphate from D-erythrose 4-phosphate: step 2/5. Its function is as follows. Catalyzes the oxidation of erythronate-4-phosphate to 3-hydroxy-2-oxo-4-phosphonooxybutanoate. This Chromohalobacter salexigens (strain ATCC BAA-138 / DSM 3043 / CIP 106854 / NCIMB 13768 / 1H11) protein is Erythronate-4-phosphate dehydrogenase.